The sequence spans 503 residues: Cytochrome c lysine N-methyltransferase 1 (503 aa).

In terms of domain architecture, SET spans 52 to 276 (SKFELLRIPR…EEAQVFISYA (225 aa)). Residues 190-291 (NYEKLISTVY…VHFEQIYGFL (102 aa)) form an SET-like region.

Belongs to the class V-like SAM-binding methyltransferase superfamily.

The protein localises to the cytoplasm. The protein resides in the cytosol. The catalysed reaction is L-lysyl-[cytochrome c] + S-adenosyl-L-methionine = N(6)-methyl-L-lysyl-[cytochrome c] + S-adenosyl-L-homocysteine + H(+). Its function is as follows. Methyltransferase which mediates trimethylation of cytochrome c (CYC1). The protein is Cytochrome c lysine N-methyltransferase 1 (CTM1) of Kluyveromyces lactis (strain ATCC 8585 / CBS 2359 / DSM 70799 / NBRC 1267 / NRRL Y-1140 / WM37) (Yeast).